Here is an 854-residue protein sequence, read N- to C-terminus: DNA gyrase subunit A (854 aa).

In terms of domain architecture, Topo IIA-type catalytic spans 42-510; the sequence is LPEVRDGLKP…ADGQVSDEDL (469 aa). Tyr-129 (O-(5'-phospho-DNA)-tyrosine intermediate) is an active-site residue. Residues 537–543 carry the GyrA-box motif; that stretch reads QKRGGKG.

This sequence belongs to the type II topoisomerase GyrA/ParC subunit family. As to quaternary structure, heterotetramer, composed of two GyrA and two GyrB chains. In the heterotetramer, GyrA contains the active site tyrosine that forms a transient covalent intermediate with DNA, while GyrB binds cofactors and catalyzes ATP hydrolysis.

Its subcellular location is the cytoplasm. The catalysed reaction is ATP-dependent breakage, passage and rejoining of double-stranded DNA.. Its activity is regulated as follows. DNA supercoiling is inhibited by the coumarin antibiotic novobiocin. Also inhibited by the fluoroquinolones ciprofloxacin and moxifloxacin. Its function is as follows. A type II topoisomerase that negatively supercoils closed circular double-stranded (ds) DNA in an ATP-dependent manner to modulate DNA topology and maintain chromosomes in an underwound state; also catalyzes the interconversion of other topological isomers of double-stranded DNA rings, including catenanes. At comparable concentrations has a stronger decatenation activity than E.coli, which is inhibited by ciprofloxacin and novobiocin. Cleaves dsDNA at the sequence 5'-AT/GGCC-3', leaving a 4 base overhang. Relaxes negatively supercoiled DNA in an ATP-independent manner. Functionally, negative supercoiling favors strand separation, and DNA replication, transcription, recombination and repair, all of which involve strand separation. Type II topoisomerases break and join 2 DNA strands simultaneously in an ATP-dependent manner. This chain is DNA gyrase subunit A, found in Mycolicibacterium smegmatis (Mycobacterium smegmatis).